The chain runs to 348 residues: Fructose-1,6-bisphosphatase class 1 (348 aa).

4 residues coordinate Mg(2+): Glu104, Asp126, Leu128, and Asp129. Substrate is bound by residues 129-132 (DGSS), Asn221, Tyr249, and Lys279. Glu285 is a binding site for Mg(2+).

It belongs to the FBPase class 1 family. As to quaternary structure, homotetramer. Requires Mg(2+) as cofactor.

The protein resides in the cytoplasm. It catalyses the reaction beta-D-fructose 1,6-bisphosphate + H2O = beta-D-fructose 6-phosphate + phosphate. It participates in carbohydrate biosynthesis; Calvin cycle. The chain is Fructose-1,6-bisphosphatase class 1 from Thermosynechococcus vestitus (strain NIES-2133 / IAM M-273 / BP-1).